We begin with the raw amino-acid sequence, 500 residues long: Cytochrome P450 monooxygenase astJ (500 aa).

Cysteine 440 provides a ligand contact to heme.

This sequence belongs to the cytochrome P450 family. Requires heme as cofactor.

The protein operates within secondary metabolite biosynthesis; terpenoid biosynthesis. In terms of biological role, cytochrome P450 monooxygenase; part of the gene cluster that mediates the biosynthesis of astellolides, drimane-type sesquiterpene esters that show antimicrobial, anti-inflammatory, and anti-tumor activities. The first step in astellolide biosynthesis is performed by the sesquiterpene cyclase astC that catalyzes the formation of drimanyl pyrophosphate from farnesyl pyrophosphate. Drimanyl pyrophosphate is then dephosphorylated by the sesquiterpene phosphatase astI to produce drimanyl monophosphate which is further dephosphorylated to drim-8-ene-11-ol by atsK. Drim-8-ene-11-ol is converted to confertifolin, probably by the cytochrome P450 monooxygenase astD and/or the dehydrogenase astE. The cytochrome P450 monooxygenases astB, astF and astJ then hydroxylate confertifolin at C6, C14, or C15 to form trihydroxy confertifolin. The nonribosomal peptide synthetase astA catalyzes ester bond formation between trihydroxy contifolin and benzoic acid (BA) or 4-hydroxy benzoic acid (4HBA), leading to the formation of dideacetyl astellolides A and B, respectively. Finally, the O-acetyltransferase astG converts dideacetyl astellolides A and B into deacetyl astellolides A and B. This is Cytochrome P450 monooxygenase astJ from Aspergillus oryzae (strain ATCC 42149 / RIB 40) (Yellow koji mold).